The chain runs to 52 residues: uncharacterized protein (52 aa).

The chain crosses the membrane as a helical span at residues 21 to 40 (VAMNSYVELLFLSVPLIHIF).

Its subcellular location is the cell membrane. This is an uncharacterized protein from Bacillus subtilis (strain 168).